The following is an 80-amino-acid chain: CLAVATA3/ESR (CLE)-related protein 40 (80 aa).

The N-terminal stretch at 1–25 (MAAMKYKGSVFIILVILLLSSSLLA) is a signal peptide. Positions 45–80 (MKKEKKIDGGTANEVEERQVPTGSDPLHHKHIPFTP) are disordered. A Hydroxyproline modification is found at Pro-65.

The protein belongs to the CLV3/ESR signal peptide family. In terms of tissue distribution, mostly expressed at low levels in stems and apex, and, to a lower extent, in roots, seedlings, leaves, flowers, siliques and pollen.

It localises to the secreted. It is found in the extracellular space. Extracellular signal peptide secreted by differentiated root cells that regulates root cell fate. Acts with ACR4 as a ligand-receptor pair in a signal transduction pathway, coordinating movement of the root tip and organization of cell divisions in the root meristem. Promotes cell differentiation in the distal root meristem in a dose-dependent manner, especially the transition from columella stem cells (CSC) daughters into columella cells (CCs). Induces ACR4 expression in root quiescent center (QC). Involved in WUX5 QC-specific expression pattern regulation. Regulates the transition of protophloem cells from proliferation to differentiation, thus impinging on postembryonic growth capacity of the root meristem; this signaling pathway requires CRN and CLV2. This is CLAVATA3/ESR (CLE)-related protein 40 from Arabidopsis thaliana (Mouse-ear cress).